The following is a 710-amino-acid chain: Chloride channel protein CLC-e (710 aa).

The next 12 membrane-spanning stretches (helical) occupy residues 74 to 94, 122 to 142, 164 to 184, 193 to 213, 222 to 242, 261 to 281, 296 to 316, 340 to 360, 379 to 399, 412 to 432, 451 to 471, and 472 to 492; these read ELAIASACLVGVLTGVSVVLF, IGSNWLRVILVPTIGGLVVSI, VKAVLRPFLKTVAACVTLGTG, SVEIGASIAKGVNSLFNKSPQ, GSAAGISSGFNAAVAGCFFAV, TTSMVILSAVTASVVSEIGLG, PGELPLYLLLGALCGLVSLAL, VFPVMGGLSVGIIALVYPEVL, GLSADLLLQLVAVKIAATAWC, SLFIGGAAGMAYGKFIGLALA, GLVGMAATLAGVCQVPLTAVL, and LLFELTQDYRIVLPLLGAVGM. The interval 500-534 is disordered; the sequence is QSKRQETRETKETRKRKSQEAVQSLTSSDDESSTN. Positions 502-511 are enriched in basic and acidic residues; it reads KRQETRETKE. Residues 520–534 show a composition bias toward polar residues; sequence AVQSLTSSDDESSTN. 2 consecutive CBS domains span residues 565 to 624 and 640 to 702; these read MRTR…GNNR and KCKV…ATRM. A helical transmembrane segment spans residues 667–687; that stretch reads HVAVVSGSIDAPRIHPVGVLD.

The protein belongs to the chloride channel (TC 2.A.49) family. Homodimer.

Its subcellular location is the membrane. The enzyme catalyses 2 chloride(in) + H(+)(out) = 2 chloride(out) + H(+)(in). Voltage-gated thylakoid chloride (Cl) channel/transporter involved in chloride homeostasis after transition from light to dark. Influences chloroplast ultrastructure and subsequent photosynthetic electron transport. During photosynthetic response on transition from dark to low light, involved in a sequential mechanism of adaptation; VCCN1 and CLCe first trigger the activation of photoprotection, which is later down-regulated by KEA3 to a low steady state, while adjusting electron transport. Regulates photosynthesis by a pH-independent mechanism likely involving Cl(-) homeostasis. The polypeptide is Chloride channel protein CLC-e (Arabidopsis thaliana (Mouse-ear cress)).